A 274-amino-acid chain; its full sequence is Glutamate--cysteine ligase regulatory subunit (274 aa).

Residue S59 is modified to Phosphoserine. Position 263 is an N6-acetyllysine (K263).

This sequence belongs to the aldo/keto reductase family. Glutamate--cysteine ligase light chain subfamily. As to quaternary structure, heterodimer of a catalytic heavy chain and a regulatory light chain.

The protein operates within sulfur metabolism; glutathione biosynthesis; glutathione from L-cysteine and L-glutamate: step 1/2. The sequence is that of Glutamate--cysteine ligase regulatory subunit (GCLM) from Bos taurus (Bovine).